Reading from the N-terminus, the 300-residue chain is Fatty acid hydroxylase uhd1 (300 aa).

NADP(+)-binding positions include 14-20 (GANGFVG), Arg39, 63-64 (DL), 83-85 (VAS), Tyr156, Lys160, 183-186 (PVYI), and Ser199. Catalysis depends on Lys160, which acts as the Proton donor.

The protein belongs to the NAD(P)-dependent epimerase/dehydratase family. Dihydroflavonol-4-reductase subfamily.

Its pathway is secondary metabolite biosynthesis. Its function is as follows. Fatty acid hydroxylase; part of the gene cluster that mediates the biosynthesis of the glycolipid biosurfactant ustilagic acid (UA). UA is a secreted cellobiose glycolipid that is toxic for many microorganisms and confers biocontrol activity to U.maydis. UA consists of 15,16-dihydroxypalmitic or 2,15,16-trihydroxypalmitic acid, which is O-glycosidically linked to cellobiose at its terminal hydroxyl group. In addition, the cellobiose moiety is acetylated and acylated with a short-chain hydroxy fatty acid. UA biosynthesis starts with omega-hydroxylation of palmitic acid catalyzed by the cytochrome P450 monooxygenase cyp1. Terminal hydroxylation of palmitic acid precedes subterminal hydroxylation catalyzed by the cytochrome P450 monooxygenase cyp2. Sequential glucosylation of the hydroxy fatty acid is probably catalyzed by the glycosyltransferase ugt1. The cellobiose lipid is further decorated by acetylation of the proximal glucose residue and by acylation with a short-chain beta-hydroxy fatty acid at the distal glucose residue. The acyltransferase uat1 may be a good candidate for catalyzing either acetylation or acylation of the cellobiose lipid. The fatty acid synthase fas2 may be involved in synthesis of the carbon backbone of the short-chain beta-hydroxy fatty acid esterified to the cellobiose disaccharide. The secreted UA consists of a mixture of both alpha-hydroxylated and non-hydroxylated glycolipids; therefore, alpha-hydroxylation of the long-chain fatty, catalyzed by the fatty acid hydroxylase ahd1, occurs late in UA biosynthesis and may be the last step before secretion. This is Fatty acid hydroxylase uhd1 from Mycosarcoma maydis (Corn smut fungus).